The primary structure comprises 221 residues: Lysine N-acyltransferase MbtK (221 aa).

The disordered stretch occupies residues 1–34 (MSDAPAESAPAQIDPAQTDPAEQPVQILPRERSD). Substrate is bound at residue His-141. The active-site Proton acceptor is Asp-179.

Belongs to the lysine N-acyltransferase MbtK family. Monomer.

Its pathway is siderophore biosynthesis; mycobactin biosynthesis. In terms of biological role, acyltransferase required for the direct transfer of medium- to long-chain fatty acyl moieties from a carrier protein (MbtL) on to the epsilon-amino group of lysine residue in the mycobactin core. The chain is Lysine N-acyltransferase MbtK (mbtK) from Mycolicibacterium paratuberculosis (strain ATCC BAA-968 / K-10) (Mycobacterium paratuberculosis).